Consider the following 262-residue polypeptide: 2-aminoethylphosphonate dioxygenase (262 aa).

Residue lysine 108 participates in 2-oxoglutarate binding. Fe cation contacts are provided by histidine 118, aspartate 120, and histidine 198.

Belongs to the PhyH family. Fe(2+) serves as cofactor.

The enzyme catalyses (2-aminoethyl)phosphonate + 2-oxoglutarate + O2 = (1R)-(2-amino-1-hydroxyethyl)phosphonate + succinate + CO2. Its activity is regulated as follows. Activity is enhanced by ascorbate. Functionally, involved in the degradation of the organophosphonate 2-aminoethylphosphonic acid (2-AEP). Catalyzes the hydroxylation of 2-aminoethylphosphonic acid to yield (2-amino-1-hydroxyethyl)phosphonic acid. The polypeptide is 2-aminoethylphosphonate dioxygenase (Uncultured bacterium HF130_AEPn_1).